Reading from the N-terminus, the 642-residue chain is 1-deoxy-D-xylulose-5-phosphate synthase 2 (642 aa).

Thiamine diphosphate contacts are provided by residues H79 and 120–122 (AHS). Residue D155 coordinates Mg(2+). Thiamine diphosphate-binding positions include 156-157 (GS), N184, Y293, and E375. N184 provides a ligand contact to Mg(2+).

Belongs to the transketolase family. DXPS subfamily. Homodimer. Requires Mg(2+) as cofactor. Thiamine diphosphate is required as a cofactor.

The catalysed reaction is D-glyceraldehyde 3-phosphate + pyruvate + H(+) = 1-deoxy-D-xylulose 5-phosphate + CO2. The protein operates within metabolic intermediate biosynthesis; 1-deoxy-D-xylulose 5-phosphate biosynthesis; 1-deoxy-D-xylulose 5-phosphate from D-glyceraldehyde 3-phosphate and pyruvate: step 1/1. Its function is as follows. Catalyzes the acyloin condensation reaction between C atoms 2 and 3 of pyruvate and glyceraldehyde 3-phosphate to yield 1-deoxy-D-xylulose-5-phosphate (DXP). The sequence is that of 1-deoxy-D-xylulose-5-phosphate synthase 2 from Roseobacter denitrificans (strain ATCC 33942 / OCh 114) (Erythrobacter sp. (strain OCh 114)).